We begin with the raw amino-acid sequence, 164 residues long: Crossover junction endodeoxyribonuclease RuvC (164 aa).

Residues D7, E67, and D139 contribute to the active site. Residues D7, E67, and D139 each coordinate Mg(2+).

The protein belongs to the RuvC family. Homodimer which binds Holliday junction (HJ) DNA. The HJ becomes 2-fold symmetrical on binding to RuvC with unstacked arms; it has a different conformation from HJ DNA in complex with RuvA. In the full resolvosome a probable DNA-RuvA(4)-RuvB(12)-RuvC(2) complex forms which resolves the HJ. Mg(2+) is required as a cofactor.

It is found in the cytoplasm. The enzyme catalyses Endonucleolytic cleavage at a junction such as a reciprocal single-stranded crossover between two homologous DNA duplexes (Holliday junction).. Its function is as follows. The RuvA-RuvB-RuvC complex processes Holliday junction (HJ) DNA during genetic recombination and DNA repair. Endonuclease that resolves HJ intermediates. Cleaves cruciform DNA by making single-stranded nicks across the HJ at symmetrical positions within the homologous arms, yielding a 5'-phosphate and a 3'-hydroxyl group; requires a central core of homology in the junction. The consensus cleavage sequence is 5'-(A/T)TT(C/G)-3'. Cleavage occurs on the 3'-side of the TT dinucleotide at the point of strand exchange. HJ branch migration catalyzed by RuvA-RuvB allows RuvC to scan DNA until it finds its consensus sequence, where it cleaves and resolves the cruciform DNA. The protein is Crossover junction endodeoxyribonuclease RuvC of Geobacter sp. (strain M21).